We begin with the raw amino-acid sequence, 207 residues long: Inhibitor of hydrogen peroxide resistance (207 aa).

The H-T-H motif DNA-binding region spans Met-163–Ala-182.

It belongs to the IprA family.

Functionally, involved in oxidative stress resistance. The protein is Inhibitor of hydrogen peroxide resistance of Salmonella typhimurium (strain LT2 / SGSC1412 / ATCC 700720).